The sequence spans 335 residues: Autophagy-related protein 21 (335 aa).

WD repeat units follow at residues 165–205 and 210–249; these read CHSS…LVTE and YIPA…SDPN.

This sequence belongs to the WD repeat PROPPIN family.

The protein resides in the cytoplasm. The protein localises to the golgi apparatus. It is found in the golgi stack membrane. It localises to the vacuole membrane. Its subcellular location is the preautophagosomal structure membrane. In terms of biological role, required for cytoplasm to vacuole transport (Cvt) vesicles formation and autophagy. Has a role in sporulation. The polypeptide is Autophagy-related protein 21 (mug179) (Schizosaccharomyces pombe (strain 972 / ATCC 24843) (Fission yeast)).